The primary structure comprises 235 residues: Sperm-associated microtubule inner protein 5 (235 aa).

Microtubule inner protein component of sperm flagellar doublet microtubules. In terms of tissue distribution, expressed in sperm.

The protein localises to the cytoplasm. It localises to the cytoskeleton. It is found in the flagellum axoneme. Its subcellular location is the nucleus. Microtubule inner protein (MIP) part of the dynein-decorated doublet microtubules (DMTs) in flagellum axoneme. May serve to reinforce and thus stabilize the microtubule structure in the sperm flagella. This is Sperm-associated microtubule inner protein 5 (SPMIP5) from Bos taurus (Bovine).